The primary structure comprises 430 residues: Long-chain specific acyl-CoA dehydrogenase, mitochondrial (430 aa).

The transit peptide at Met1 to Ser30 directs the protein to the mitochondrion. At Lys42 the chain carries N6-acetyllysine. 2 positions are modified to phosphoserine: Ser54 and Ser55. N6-acetyllysine; alternate occurs at positions 66 and 81. N6-succinyllysine; alternate is present on residues Lys66 and Lys81. An N6-acetyllysine mark is found at Lys92 and Lys95. N6-succinyllysine is present on Lys165. FAD is bound by residues Ile170–Ser179 and Phe203–Thr205. Substrate is bound at residue Ser179. Ala227 to His228 is a substrate binding site. Lys240 bears the N6-succinyllysine mark. 2 positions are modified to N6-acetyllysine; alternate: Lys254 and Lys279. N6-succinyllysine; alternate is present on residues Lys254 and Lys279. Substrate contacts are provided by residues Tyr282 and Pro289–Arg292. Glu291 functions as the Proton acceptor in the catalytic mechanism. Arg317 is an FAD binding site. Lys318 is modified (N6-acetyllysine). An N6-acetyllysine; alternate modification is found at Lys322. Lys322 is modified (N6-succinyllysine; alternate). Gln328 serves as a coordination point for FAD. The residue at position 358 (Lys358) is an N6-acetyllysine. Ser362 carries the post-translational modification Phosphoserine. FAD is bound at residue Gln385 to Gly389. Gly412–Gly413 contributes to the substrate binding site. Thr414–Glu416 lines the FAD pocket.

It belongs to the acyl-CoA dehydrogenase family. Homotetramer. It depends on FAD as a cofactor. In terms of processing, acetylation at Lys-318 and Lys-322 in proximity of the cofactor-binding sites strongly reduces catalytic activity. These sites are deacetylated by SIRT3.

The protein resides in the mitochondrion matrix. The catalysed reaction is a long-chain 2,3-saturated fatty acyl-CoA + oxidized [electron-transfer flavoprotein] + H(+) = a long-chain (2E)-enoyl-CoA + reduced [electron-transfer flavoprotein]. It catalyses the reaction hexanoyl-CoA + oxidized [electron-transfer flavoprotein] + H(+) = (2E)-hexenoyl-CoA + reduced [electron-transfer flavoprotein]. It carries out the reaction octanoyl-CoA + oxidized [electron-transfer flavoprotein] + H(+) = (2E)-octenoyl-CoA + reduced [electron-transfer flavoprotein]. The enzyme catalyses decanoyl-CoA + oxidized [electron-transfer flavoprotein] + H(+) = (2E)-decenoyl-CoA + reduced [electron-transfer flavoprotein]. The catalysed reaction is dodecanoyl-CoA + oxidized [electron-transfer flavoprotein] + H(+) = (2E)-dodecenoyl-CoA + reduced [electron-transfer flavoprotein]. It catalyses the reaction tetradecanoyl-CoA + oxidized [electron-transfer flavoprotein] + H(+) = (2E)-tetradecenoyl-CoA + reduced [electron-transfer flavoprotein]. It carries out the reaction oxidized [electron-transfer flavoprotein] + hexadecanoyl-CoA + H(+) = (2E)-hexadecenoyl-CoA + reduced [electron-transfer flavoprotein]. The enzyme catalyses octadecanoyl-CoA + oxidized [electron-transfer flavoprotein] + H(+) = (2E)-octadecenoyl-CoA + reduced [electron-transfer flavoprotein]. The catalysed reaction is eicosanoyl-CoA + oxidized [electron-transfer flavoprotein] + H(+) = (2E)-eicosenoyl-CoA + reduced [electron-transfer flavoprotein]. It catalyses the reaction docosanoyl-CoA + oxidized [electron-transfer flavoprotein] + H(+) = (2E)-docosenoyl-CoA + reduced [electron-transfer flavoprotein]. It carries out the reaction tetracosanoyl-CoA + oxidized [electron-transfer flavoprotein] + H(+) = (2E)-tetracosenoyl-CoA + reduced [electron-transfer flavoprotein]. The enzyme catalyses (5E)-tetradecenoyl-CoA + oxidized [electron-transfer flavoprotein] + H(+) = (2E,5E)-tetradecadienoyl-CoA + reduced [electron-transfer flavoprotein]. The catalysed reaction is (5Z)-tetradecenoyl-CoA + oxidized [electron-transfer flavoprotein] + H(+) = (2E,5Z)-tetradecadienoyl-CoA + reduced [electron-transfer flavoprotein]. It catalyses the reaction oxidized [electron-transfer flavoprotein] + (9Z)-octadecenoyl-CoA + H(+) = (2E,9Z)-octadecadienoyl-CoA + reduced [electron-transfer flavoprotein]. It participates in lipid metabolism; mitochondrial fatty acid beta-oxidation. Its function is as follows. Long-chain specific acyl-CoA dehydrogenase is one of the acyl-CoA dehydrogenases that catalyze the first step of mitochondrial fatty acid beta-oxidation, an aerobic process breaking down fatty acids into acetyl-CoA and allowing the production of energy from fats. The first step of fatty acid beta-oxidation consists in the removal of one hydrogen from C-2 and C-3 of the straight-chain fatty acyl-CoA thioester, resulting in the formation of trans-2-enoyl-CoA. Among the different mitochondrial acyl-CoA dehydrogenases, long-chain specific acyl-CoA dehydrogenase can act on saturated and unsaturated acyl-CoAs with 6 to 24 carbons with a preference for 8 to 18 carbons long primary chains. This is Long-chain specific acyl-CoA dehydrogenase, mitochondrial from Sus scrofa (Pig).